Consider the following 211-residue polypeptide: Large ribosomal subunit protein bL25 (211 aa).

Belongs to the bacterial ribosomal protein bL25 family. CTC subfamily. Part of the 50S ribosomal subunit; part of the 5S rRNA/L5/L18/L25 subcomplex. Contacts the 5S rRNA. Binds to the 5S rRNA independently of L5 and L18.

Functionally, this is one of the proteins that binds to the 5S RNA in the ribosome where it forms part of the central protuberance. This Anaplasma phagocytophilum (strain HZ) protein is Large ribosomal subunit protein bL25.